The following is a 115-amino-acid chain: UPF0295 protein BLi00901/BL05075 (115 aa).

2 helical membrane passes run 18–38 (LVFI…SVLL) and 41–61 (VFMI…FWIG).

Belongs to the UPF0295 family.

The protein localises to the cell membrane. The chain is UPF0295 protein BLi00901/BL05075 from Bacillus licheniformis (strain ATCC 14580 / DSM 13 / JCM 2505 / CCUG 7422 / NBRC 12200 / NCIMB 9375 / NCTC 10341 / NRRL NRS-1264 / Gibson 46).